We begin with the raw amino-acid sequence, 172 residues long: Small ribosomal subunit protein uS5 (172 aa).

An S5 DRBM domain is found at 13-76 (LVEKMISVNR…EQARHNMMKI (64 aa)).

This sequence belongs to the universal ribosomal protein uS5 family. In terms of assembly, part of the 30S ribosomal subunit. Contacts proteins S4 and S8.

With S4 and S12 plays an important role in translational accuracy. In terms of biological role, located at the back of the 30S subunit body where it stabilizes the conformation of the head with respect to the body. The protein is Small ribosomal subunit protein uS5 of Chromobacterium violaceum (strain ATCC 12472 / DSM 30191 / JCM 1249 / CCUG 213 / NBRC 12614 / NCIMB 9131 / NCTC 9757 / MK).